The sequence spans 601 residues: Protein CT_858 (601 aa).

It belongs to the chlamydial CPn_1016/CT_858/TC_0248 family.

The protein is Protein CT_858 of Chlamydia trachomatis serovar D (strain ATCC VR-885 / DSM 19411 / UW-3/Cx).